We begin with the raw amino-acid sequence, 462 residues long: ATP synthase subunit beta (462 aa).

150–157 is an ATP binding site; it reads GGAGVGKT.

The protein belongs to the ATPase alpha/beta chains family. As to quaternary structure, F-type ATPases have 2 components, CF(1) - the catalytic core - and CF(0) - the membrane proton channel. CF(1) has five subunits: alpha(3), beta(3), gamma(1), delta(1), epsilon(1). CF(0) has three main subunits: a(1), b(2) and c(9-12). The alpha and beta chains form an alternating ring which encloses part of the gamma chain. CF(1) is attached to CF(0) by a central stalk formed by the gamma and epsilon chains, while a peripheral stalk is formed by the delta and b chains. In this bacterium the a and b subunits are transcribed but do not seem to be translated, thus the ATP synthase consists of the alpha, beta, gamma, delta, epsilon and c subunits.

Its subcellular location is the cell membrane. It catalyses the reaction ATP + H2O + 4 H(+)(in) = ADP + phosphate + 5 H(+)(out). Functionally, produces ATP from ADP in the presence of a proton gradient across the membrane. The catalytic sites are hosted primarily by the beta subunits. The chain is ATP synthase subunit beta from Moorella thermoacetica (strain ATCC 39073 / JCM 9320).